A 333-amino-acid chain; its full sequence is Anthranilate phosphoribosyltransferase (333 aa).

Residues glycine 81, 84-85 (GD), threonine 89, 91-94 (NIST), 109-117 (KHGNRSVSS), and alanine 121 contribute to the 5-phospho-alpha-D-ribose 1-diphosphate site. Position 81 (glycine 81) interacts with anthranilate. Serine 93 is a Mg(2+) binding site. Residue asparagine 112 coordinates anthranilate. Arginine 167 serves as a coordination point for anthranilate. Positions 225 and 226 each coordinate Mg(2+).

Belongs to the anthranilate phosphoribosyltransferase family. In terms of assembly, homodimer. Requires Mg(2+) as cofactor.

It catalyses the reaction N-(5-phospho-beta-D-ribosyl)anthranilate + diphosphate = 5-phospho-alpha-D-ribose 1-diphosphate + anthranilate. The protein operates within amino-acid biosynthesis; L-tryptophan biosynthesis; L-tryptophan from chorismate: step 2/5. Functionally, catalyzes the transfer of the phosphoribosyl group of 5-phosphorylribose-1-pyrophosphate (PRPP) to anthranilate to yield N-(5'-phosphoribosyl)-anthranilate (PRA). The protein is Anthranilate phosphoribosyltransferase of Pasteurella multocida (strain Pm70).